A 199-amino-acid polypeptide reads, in one-letter code: MFEYCMARQFVAGVDEVGRGPLAGDVVAAAVILGEDHGIEGLADSKKITEKKRDALFDVIQERAVSFCIARASVEEIDELNILHASLLAMKRAVEGLNIQPQYIYVDGNKLPKWTYSAEAVVKGDSLVEEISAASILAKVTRDREMVALDEKYPGYGLAGHKGYPTKVHMDALKRLGPTIIHRKSFAPVRAAIEQMNLF.

The RNase H type-2 domain maps to 9-198; it reads QFVAGVDEVG…VRAAIEQMNL (190 aa). Positions 15, 16, and 107 each coordinate a divalent metal cation.

Belongs to the RNase HII family. It depends on Mn(2+) as a cofactor. The cofactor is Mg(2+).

The protein localises to the cytoplasm. The catalysed reaction is Endonucleolytic cleavage to 5'-phosphomonoester.. In terms of biological role, endonuclease that specifically degrades the RNA of RNA-DNA hybrids. This Saccharophagus degradans (strain 2-40 / ATCC 43961 / DSM 17024) protein is Ribonuclease HII.